The sequence spans 478 residues: Muscarinic acetylcholine receptor M4 (478 aa).

The Extracellular portion of the chain corresponds to 1 to 30; the sequence is MXNFTPVNGSSANQSVRLVTAAHNHLETVE. N-linked (GlcNAc...) asparagine glycans are attached at residues asparagine 8 and asparagine 13. The chain crosses the membrane as a helical span at residues 31-53; the sequence is MVFIATVTGSLSLVTVVGNILVM. The Cytoplasmic segment spans residues 54–67; the sequence is LSIKVNRQLQTVNN. The helical transmembrane segment at 68 to 88 threads the bilayer; that stretch reads YFLFSLGCADLIIGAFSMNLY. Topologically, residues 89-105 are extracellular; it reads TLYIIKGYWPLGAVVCD. The cysteines at positions 104 and 184 are disulfide-linked. A helical membrane pass occupies residues 106–127; it reads LWLALDYVVSNASVMNLLIISF. The Cytoplasmic portion of the chain corresponds to 128-147; that stretch reads DRYFCVTKPLTYPARRTTKM. The chain crosses the membrane as a helical span at residues 148-170; it reads AGLMIAAAWVLSFVLWAPAILFW. Over 171-192 the chain is Extracellular; sequence QFVVGKRTVPDNQCFIQFLSNP. A helical transmembrane segment spans residues 193–215; the sequence is AVTFGTAIAAFYLPVVIMTVLYI. The Cytoplasmic segment spans residues 216–400; that stretch reads HISLASRSRV…AARERKVTRT (185 aa). Residues 271-333 are disordered; the sequence is LEEAPPPALP…APTLQPRTLN (63 aa). Over residues 274–285 the composition is skewed to pro residues; that stretch reads APPPALPPPPRP. The span at 293–303 shows a compositional bias: polar residues; it reads NESSSGSATQN. Low complexity predominate over residues 310–332; it reads TELSTAEATTPALPAPTLQPRTL. Residues 401 to 421 traverse the membrane as a helical segment; sequence IFAILLAFILTWTPYNVMVLV. The Extracellular segment spans residues 422 to 435; the sequence is NTFCQSCIPERVWS. A helical membrane pass occupies residues 436–455; that stretch reads IGYWLCYVNSTINPACYALC. The Cytoplasmic portion of the chain corresponds to 456-478; sequence NATFKKTFRHLLLCQYRNIGTAR. A phosphothreonine mark is found at threonine 458, threonine 462, and threonine 476.

It belongs to the G-protein coupled receptor 1 family. Muscarinic acetylcholine receptor subfamily. CHRM4 sub-subfamily.

It is found in the cell membrane. Its subcellular location is the postsynaptic cell membrane. Its function is as follows. The muscarinic acetylcholine receptor mediates various cellular responses, including inhibition of adenylate cyclase, breakdown of phosphoinositides and modulation of potassium channels through the action of G proteins. Primary transducing effect is inhibition of adenylate cyclase. This chain is Muscarinic acetylcholine receptor M4 (Chrm4), found in Rattus norvegicus (Rat).